Reading from the N-terminus, the 433-residue chain is Serine hydroxymethyltransferase (433 aa).

121 to 123 (AHV) is a binding site for (6S)-5,6,7,8-tetrahydrofolate. An N6-(pyridoxal phosphate)lysine modification is found at Lys-227. Glu-243 serves as a coordination point for (6S)-5,6,7,8-tetrahydrofolate.

Belongs to the SHMT family. As to quaternary structure, homodimer. The cofactor is pyridoxal 5'-phosphate.

It localises to the cytoplasm. Its pathway is amino-acid biosynthesis; glycine biosynthesis; glycine from L-serine: step 1/1. In terms of biological role, catalyzes the reversible interconversion of serine and glycine with a modified folate serving as the one-carbon carrier. Also exhibits a pteridine-independent aldolase activity toward beta-hydroxyamino acids, producing glycine and aldehydes, via a retro-aldol mechanism. This chain is Serine hydroxymethyltransferase, found in Saccharolobus islandicus (strain L.S.2.15 / Lassen #1) (Sulfolobus islandicus).